A 101-amino-acid polypeptide reads, in one-letter code: MIPGELFIQDGEIELNAGRKTVTLSVANTGDRPIQVGSHYHFFETNPALKFDRKKARGMRLDIAAGTAVRFEPGQTRDVQLVALAGKRMVYGFRGDVMGKL.

This sequence belongs to the urease beta subunit family. In terms of assembly, heterotrimer of UreA (gamma), UreB (beta) and UreC (alpha) subunits. Three heterotrimers associate to form the active enzyme.

The protein localises to the cytoplasm. It catalyses the reaction urea + 2 H2O + H(+) = hydrogencarbonate + 2 NH4(+). The protein operates within nitrogen metabolism; urea degradation; CO(2) and NH(3) from urea (urease route): step 1/1. In Bradyrhizobium sp. (strain BTAi1 / ATCC BAA-1182), this protein is Urease subunit beta.